The chain runs to 65 residues: Large ribosomal subunit protein bL35 (65 aa).

Positions 1–28 (MPKIKTNRGAAKRFRKTGSGKIRRNKAF) are disordered. Positions 10 to 26 (AAKRFRKTGSGKIRRNK) are enriched in basic residues.

It belongs to the bacterial ribosomal protein bL35 family.

The chain is Large ribosomal subunit protein bL35 from Syntrophotalea carbinolica (strain DSM 2380 / NBRC 103641 / GraBd1) (Pelobacter carbinolicus).